The chain runs to 163 residues: GTP-dependent dephospho-CoA kinase (163 aa).

Residues Asp38, Val39, Asp57, Glu115, and Asp138 each contribute to the GTP site.

This sequence belongs to the GTP-dependent DPCK family.

The catalysed reaction is 3'-dephospho-CoA + GTP = GDP + CoA + H(+). Its pathway is cofactor biosynthesis; coenzyme A biosynthesis. Its function is as follows. Catalyzes the GTP-dependent phosphorylation of the 3'-hydroxyl group of dephosphocoenzyme A to form coenzyme A (CoA). In Methanothermobacter thermautotrophicus (strain ATCC 29096 / DSM 1053 / JCM 10044 / NBRC 100330 / Delta H) (Methanobacterium thermoautotrophicum), this protein is GTP-dependent dephospho-CoA kinase.